Reading from the N-terminus, the 333-residue chain is Biotin synthase (333 aa).

Residues 54–283 (FCSNTFDMCS…RAFIRLAGGR (230 aa)) form the Radical SAM core domain. Residues Cys72, Cys76, and Cys79 each contribute to the [4Fe-4S] cluster site. Ser116, Cys148, Cys208, and Arg278 together coordinate [2Fe-2S] cluster.

Belongs to the radical SAM superfamily. Biotin synthase family. As to quaternary structure, homodimer. The cofactor is [4Fe-4S] cluster. [2Fe-2S] cluster is required as a cofactor.

The enzyme catalyses (4R,5S)-dethiobiotin + (sulfur carrier)-SH + 2 reduced [2Fe-2S]-[ferredoxin] + 2 S-adenosyl-L-methionine = (sulfur carrier)-H + biotin + 2 5'-deoxyadenosine + 2 L-methionine + 2 oxidized [2Fe-2S]-[ferredoxin]. The protein operates within cofactor biosynthesis; biotin biosynthesis; biotin from 7,8-diaminononanoate: step 2/2. Catalyzes the conversion of dethiobiotin (DTB) to biotin by the insertion of a sulfur atom into dethiobiotin via a radical-based mechanism. The chain is Biotin synthase from Brachyspira hyodysenteriae (strain ATCC 49526 / WA1).